A 111-amino-acid chain; its full sequence is Nucleoid-associated protein glr3498 (111 aa).

This sequence belongs to the YbaB/EbfC family. In terms of assembly, homodimer.

Its subcellular location is the cytoplasm. The protein resides in the nucleoid. Binds to DNA and alters its conformation. May be involved in regulation of gene expression, nucleoid organization and DNA protection. The polypeptide is Nucleoid-associated protein glr3498 (Gloeobacter violaceus (strain ATCC 29082 / PCC 7421)).